The following is a 578-amino-acid chain: Isocitrate dehydrogenase kinase/phosphatase (578 aa).

Residues 315-321 (APGIRGM) and Lys-336 contribute to the ATP site. Asp-371 is an active-site residue.

Belongs to the AceK family.

The protein resides in the cytoplasm. It carries out the reaction L-seryl-[isocitrate dehydrogenase] + ATP = O-phospho-L-seryl-[isocitrate dehydrogenase] + ADP + H(+). Bifunctional enzyme which can phosphorylate or dephosphorylate isocitrate dehydrogenase (IDH) on a specific serine residue. This is a regulatory mechanism which enables bacteria to bypass the Krebs cycle via the glyoxylate shunt in response to the source of carbon. When bacteria are grown on glucose, IDH is fully active and unphosphorylated, but when grown on acetate or ethanol, the activity of IDH declines drastically concomitant with its phosphorylation. The sequence is that of Isocitrate dehydrogenase kinase/phosphatase from Escherichia coli O157:H7.